The following is a 255-amino-acid chain: Thiazole synthase (255 aa).

Catalysis depends on Lys-95, which acts as the Schiff-base intermediate with DXP. 1-deoxy-D-xylulose 5-phosphate contacts are provided by residues Gly-156, 182–183, and 204–205; these read AG and NT.

This sequence belongs to the ThiG family. Homotetramer. Forms heterodimers with either ThiH or ThiS.

The protein localises to the cytoplasm. The catalysed reaction is [ThiS sulfur-carrier protein]-C-terminal-Gly-aminoethanethioate + 2-iminoacetate + 1-deoxy-D-xylulose 5-phosphate = [ThiS sulfur-carrier protein]-C-terminal Gly-Gly + 2-[(2R,5Z)-2-carboxy-4-methylthiazol-5(2H)-ylidene]ethyl phosphate + 2 H2O + H(+). It functions in the pathway cofactor biosynthesis; thiamine diphosphate biosynthesis. Functionally, catalyzes the rearrangement of 1-deoxy-D-xylulose 5-phosphate (DXP) to produce the thiazole phosphate moiety of thiamine. Sulfur is provided by the thiocarboxylate moiety of the carrier protein ThiS. In vitro, sulfur can be provided by H(2)S. The protein is Thiazole synthase of Aeromonas salmonicida (strain A449).